The sequence spans 225 residues: Germin-like protein 8-6 (225 aa).

Positions 1–23 (MASPSSLCLLTALLALVSWQTIA) are cleaved as a signal peptide. An intrachain disulfide couples Cys-33 to Cys-48. One can recognise a Cupin type-1 domain in the interval 63–213 (AMLDTPRKTN…AFQVEKGTID (151 aa)). Asn-77 carries N-linked (GlcNAc...) asparagine glycosylation. Residues His-110, His-112, and Glu-117 each contribute to the Mn(2+) site. A glycan (N-linked (GlcNAc...) asparagine) is linked at Asn-136. Mn(2+) is bound at residue His-158.

The protein belongs to the germin family. Oligomer (believed to be a pentamer but probably hexamer).

The protein resides in the secreted. It localises to the extracellular space. Its subcellular location is the apoplast. Functionally, plays a role in broad-spectrum disease resistance. Probably has no oxalate oxidase activity even if the active site is conserved. The chain is Germin-like protein 8-6 from Oryza sativa subsp. japonica (Rice).